We begin with the raw amino-acid sequence, 286 residues long: Probable glucose uptake protein GlcU (286 aa).

The next 10 helical transmembrane spans lie at 4–22 (IFLA…LFNV), 27–49 (GPYS…VYIF), 53–72 (VLTP…WALG), 85–107 (VSRT…GVIV), 111–133 (WSTT…GVIL), 154–176 (IVIL…LFNV), 181–198 (ALLP…LLTF), 211–228 (IIPG…FISQ), 233–255 (VATS…ILIL), and 267–284 (IVVG…LGIA).

It belongs to the GRP transporter (TC 2.A.7.5) family.

The protein resides in the cell membrane. Functionally, involved in the uptake of glucose. This chain is Probable glucose uptake protein GlcU (glcU), found in Bacillus cereus (strain ATCC 14579 / DSM 31 / CCUG 7414 / JCM 2152 / NBRC 15305 / NCIMB 9373 / NCTC 2599 / NRRL B-3711).